The primary structure comprises 512 residues: Glycerol-3-phosphate dehydrogenase (512 aa).

16 to 44 lines the FAD pocket; it reads DVAVVGGGINGVGIAADAAGRGLSVFLCE.

Belongs to the FAD-dependent glycerol-3-phosphate dehydrogenase family. FAD serves as cofactor.

Its subcellular location is the cytoplasm. The enzyme catalyses a quinone + sn-glycerol 3-phosphate = dihydroxyacetone phosphate + a quinol. This Pseudomonas aeruginosa (strain ATCC 15692 / DSM 22644 / CIP 104116 / JCM 14847 / LMG 12228 / 1C / PRS 101 / PAO1) protein is Glycerol-3-phosphate dehydrogenase (glpD).